The chain runs to 233 residues: Lipoprotein-releasing system ATP-binding protein LolD (233 aa).

The ABC transporter domain maps to Tyr10–Pro233. Gly46 to Ser53 is a binding site for ATP.

It belongs to the ABC transporter superfamily. Lipoprotein translocase (TC 3.A.1.125) family. In terms of assembly, the complex is composed of two ATP-binding proteins (LolD) and two transmembrane proteins (LolC and LolE).

The protein localises to the cell inner membrane. Functionally, part of the ABC transporter complex LolCDE involved in the translocation of mature outer membrane-directed lipoproteins, from the inner membrane to the periplasmic chaperone, LolA. Responsible for the formation of the LolA-lipoprotein complex in an ATP-dependent manner. This is Lipoprotein-releasing system ATP-binding protein LolD from Nitratidesulfovibrio vulgaris (strain ATCC 29579 / DSM 644 / CCUG 34227 / NCIMB 8303 / VKM B-1760 / Hildenborough) (Desulfovibrio vulgaris).